We begin with the raw amino-acid sequence, 451 residues long: Serine--tRNA ligase (451 aa).

247 to 249 contacts L-serine; it reads TAE. Residues 278–280 and V294 contribute to the ATP site; that span reads RKE. Residue E301 coordinates L-serine. Residue 365-368 coordinates ATP; sequence ELAS. Residue T400 participates in L-serine binding.

The protein belongs to the class-II aminoacyl-tRNA synthetase family. Type-1 seryl-tRNA synthetase subfamily. Homodimer. The tRNA molecule binds across the dimer.

It localises to the cytoplasm. The enzyme catalyses tRNA(Ser) + L-serine + ATP = L-seryl-tRNA(Ser) + AMP + diphosphate + H(+). It catalyses the reaction tRNA(Sec) + L-serine + ATP = L-seryl-tRNA(Sec) + AMP + diphosphate + H(+). It functions in the pathway aminoacyl-tRNA biosynthesis; selenocysteinyl-tRNA(Sec) biosynthesis; L-seryl-tRNA(Sec) from L-serine and tRNA(Sec): step 1/1. Its function is as follows. Catalyzes the attachment of serine to tRNA(Ser). Is also able to aminoacylate tRNA(Sec) with serine, to form the misacylated tRNA L-seryl-tRNA(Sec), which will be further converted into selenocysteinyl-tRNA(Sec). In Pyrobaculum aerophilum (strain ATCC 51768 / DSM 7523 / JCM 9630 / CIP 104966 / NBRC 100827 / IM2), this protein is Serine--tRNA ligase.